The chain runs to 80 residues: Small ribosomal subunit protein bS18 (80 aa).

Belongs to the bacterial ribosomal protein bS18 family. Part of the 30S ribosomal subunit. Forms a tight heterodimer with protein bS6.

Its function is as follows. Binds as a heterodimer with protein bS6 to the central domain of the 16S rRNA, where it helps stabilize the platform of the 30S subunit. This chain is Small ribosomal subunit protein bS18, found in Clostridium botulinum (strain 657 / Type Ba4).